An 899-amino-acid polypeptide reads, in one-letter code: Linoleate 13S-lipoxygenase 2-1, chloroplastic (899 aa).

A chloroplast-targeting transit peptide spans 1-40 (MLKPQLQQSSQSTKALIPSWNTNPLFLASFPINILNKNFR). The region spanning 78 to 200 (VQKQVNLNLS…DNPDKRIFFT (123 aa)) is the PLAT domain. One can recognise a Lipoxygenase domain in the interval 203 to 899 (SYLPSQTPSG…GKGVPYSISI (697 aa)). The interval 252–287 (SNNDDAKRPVLGGKELPYPRRCKTGRPRSKKDPLSE) is disordered. Basic residues predominate over residues 271–280 (RRCKTGRPRS). Residues histidine 557, histidine 562, histidine 749, asparagine 753, and isoleucine 899 each coordinate Fe cation.

This sequence belongs to the lipoxygenase family. Monomer. The cofactor is Fe cation. Expressed in leaves and floral buds.

The protein localises to the plastid. The protein resides in the chloroplast stroma. It is found in the chloroplast thylakoid. It carries out the reaction (9Z,12Z)-octadecadienoate + O2 = (13S)-hydroperoxy-(9Z,11E)-octadecadienoate. The enzyme catalyses (9Z,12Z,15Z)-octadecatrienoate + O2 = (13S)-hydroperoxy-(9Z,11E,15Z)-octadecatrienoate. It functions in the pathway lipid metabolism; oxylipin biosynthesis. Functionally, plant lipoxygenase involved in a number of diverse aspects of plant physiology including growth and development, pest resistance, and senescence. May not be involved in the bulk production of jasmonate upon wounding. Catalyzes the hydroperoxidation of lipids containing a cis,cis-1,4-pentadiene structure. Linolenic acid is the preferred substrate, before linoleic and arachidonic acids. Also has some activity with phosphatidylglycerol, but not with galactolipids. The sequence is that of Linoleate 13S-lipoxygenase 2-1, chloroplastic from Solanum tuberosum (Potato).